The chain runs to 275 residues: Ribosomal RNA small subunit methyltransferase A (275 aa).

The S-adenosyl-L-methionine site is built by N19, L21, G46, E71, D94, and N117.

It belongs to the class I-like SAM-binding methyltransferase superfamily. rRNA adenine N(6)-methyltransferase family. RsmA subfamily.

It localises to the cytoplasm. It carries out the reaction adenosine(1518)/adenosine(1519) in 16S rRNA + 4 S-adenosyl-L-methionine = N(6)-dimethyladenosine(1518)/N(6)-dimethyladenosine(1519) in 16S rRNA + 4 S-adenosyl-L-homocysteine + 4 H(+). In terms of biological role, specifically dimethylates two adjacent adenosines (A1518 and A1519) in the loop of a conserved hairpin near the 3'-end of 16S rRNA in the 30S particle. May play a critical role in biogenesis of 30S subunits. This is Ribosomal RNA small subunit methyltransferase A from Burkholderia mallei (strain NCTC 10247).